Here is an 860-residue protein sequence, read N- to C-terminus: Leucine--tRNA ligase (860 aa).

Residues Pro42–His52 carry the 'HIGH' region motif. The 'KMSKS' region motif lies at Lys619 to Ser623. Lys622 lines the ATP pocket.

This sequence belongs to the class-I aminoacyl-tRNA synthetase family.

It is found in the cytoplasm. The catalysed reaction is tRNA(Leu) + L-leucine + ATP = L-leucyl-tRNA(Leu) + AMP + diphosphate. The chain is Leucine--tRNA ligase from Klebsiella pneumoniae subsp. pneumoniae (strain ATCC 700721 / MGH 78578).